A 1045-amino-acid polypeptide reads, in one-letter code: FERM, ARHGEF and pleckstrin domain-containing protein 1 (1045 aa).

Residues 1-37 (MGEIEQRPTPGSRLGAPENSGISTLERGQKPPPTPSG) are disordered. Residues serine 20 and serine 23 each carry the phosphoserine modification. Threonine 24 is subject to Phosphothreonine. In terms of domain architecture, FERM spans 40–320 (VSIKIQMLDD…EHHAFFRLFE (281 aa)). Serine 340, serine 373, serine 389, serine 403, serine 418, serine 427, and serine 433 each carry phosphoserine. A disordered region spans residues 392–534 (SASLTFGEGA…TDDEDEGRRK (143 aa)). Composition is skewed to polar residues over residues 471 to 489 (TGSL…NSQG) and 496 to 511 (VTLS…QASP). 2 positions are modified to phosphoserine: serine 510 and serine 514. In terms of domain architecture, DH spans 540–730 (KAYFIAKEVS…TEMVAQLHGT (191 aa)). In terms of domain architecture, PH 1 spans 759–856 (EFIRLGSLSK…WVEDIQMAID (98 aa)). Serine 833, serine 872, and serine 878 each carry phosphoserine. The segment at 866–902 (PEFLASSPPDNKSPDEATAADQESEDDLSASRTSLER) is disordered. At threonine 883 the chain carries Phosphothreonine. Residues serine 889, serine 896, and serine 899 each carry the phosphoserine modification. The PH 2 domain occupies 932-1029 (ENQLSGNLLR…WMEVIRSATS (98 aa)).

In terms of assembly, interacts with CADM1. Interacts with RAC1.

The protein resides in the cell membrane. Its subcellular location is the synapse. The protein localises to the synaptosome. It localises to the cytoplasm. It is found in the cytosol. The protein resides in the cell projection. Its subcellular location is the filopodium. The protein localises to the dendrite. It localises to the dendritic spine. Functionally, functions as a guanine nucleotide exchange factor for RAC1. May play a role in semaphorin signaling. Plays a role in the assembly and disassembly of dendritic filopodia, the formation of dendritic spines, regulation of dendrite length and ultimately the formation of synapses. The chain is FERM, ARHGEF and pleckstrin domain-containing protein 1 (FARP1) from Pongo abelii (Sumatran orangutan).